We begin with the raw amino-acid sequence, 256 residues long: MNDQRKGEHAEPTTHFGYQDVPESQKAKKVAEVFHSVAAKYDLMNDVLSGGMHRLWKRFTIELSGVRSGNRVLDIAGGTGDLAAKFSRLVGPTGQVVLADINDSMLKVGRDRLLDRGVAGNIEFVQADAEKLPFPDNHFDCVTIAFGLRNVTHKDEAIRSMLRVLKPGGRLLILEFSKPTNKLMSKAYDAYSFAFMPLAGKLITNDSESYRYLAESIRMHPDQETLKAMMVDAGFDRVTYHNMTSGIVAVHRGIKP.

Residues 1 to 12 (MNDQRKGEHAEP) show a composition bias toward basic and acidic residues. Residues 1–21 (MNDQRKGEHAEPTTHFGYQDV) form a disordered region. S-adenosyl-L-methionine-binding positions include Thr79, Asp100, and 128-129 (DA).

This sequence belongs to the class I-like SAM-binding methyltransferase superfamily. MenG/UbiE family.

It catalyses the reaction a 2-demethylmenaquinol + S-adenosyl-L-methionine = a menaquinol + S-adenosyl-L-homocysteine + H(+). The enzyme catalyses a 2-methoxy-6-(all-trans-polyprenyl)benzene-1,4-diol + S-adenosyl-L-methionine = a 5-methoxy-2-methyl-3-(all-trans-polyprenyl)benzene-1,4-diol + S-adenosyl-L-homocysteine + H(+). The protein operates within quinol/quinone metabolism; menaquinone biosynthesis; menaquinol from 1,4-dihydroxy-2-naphthoate: step 2/2. Its pathway is cofactor biosynthesis; ubiquinone biosynthesis. In terms of biological role, methyltransferase required for the conversion of demethylmenaquinol (DMKH2) to menaquinol (MKH2) and the conversion of 2-polyprenyl-6-methoxy-1,4-benzoquinol (DDMQH2) to 2-polyprenyl-3-methyl-6-methoxy-1,4-benzoquinol (DMQH2). The sequence is that of Ubiquinone/menaquinone biosynthesis C-methyltransferase UbiE from Pseudomonas putida (strain W619).